We begin with the raw amino-acid sequence, 682 residues long: Acyl-CoA synthetase short-chain family member 3, mitochondrial (682 aa).

The transit peptide at 1–29 (MKPSWLQCRKVTGAGTLGAPLPGSPSVRG) directs the protein to the mitochondrion. 222-225 (EPGR) serves as a coordination point for CoA. ATP-binding positions include 420-422 (GER) and 441-446 (DHWWQT). Lys513 is modified (N6-succinyllysine). Lys519 bears the N6-acetyllysine mark. ATP-binding residues include Asp534, Arg549, and Arg560. Position 619 (Arg619) interacts with CoA.

The protein belongs to the ATP-dependent AMP-binding enzyme family.

It localises to the mitochondrion matrix. It catalyses the reaction acetate + ATP + CoA = acetyl-CoA + AMP + diphosphate. It carries out the reaction propanoate + ATP + CoA = propanoyl-CoA + AMP + diphosphate. The enzyme catalyses butanoate + ATP + CoA = butanoyl-CoA + AMP + diphosphate. Its function is as follows. Catalyzes the synthesis of acetyl-CoA from short-chain fatty acids. Propionate is the preferred substrate but can also utilize acetate and butyrate with a much lower affinity. The sequence is that of Acyl-CoA synthetase short-chain family member 3, mitochondrial (Acss3) from Mus musculus (Mouse).